The chain runs to 456 residues: E3 ubiquitin-protein ligase RNF25 (456 aa).

Residues Ser-18 to Asn-127 enclose the RWD domain. Residues Cys-134, Cys-137, Cys-152, His-154, His-157, Cys-160, Cys-195, and Cys-198 each contribute to the Zn(2+) site. An RING-type zinc finger spans residues Cys-134–Arg-199. Residues Leu-269–Ser-456 are disordered. A compositionally biased stretch (polar residues) spans Ser-288–Ser-332. Basic and acidic residues-rich tracts occupy residues Ser-364–Asn-388 and Arg-410–Lys-421.

It belongs to the RNF25 family. As to quaternary structure, interacts with UBE2D2, and may also interact with UBE2E1 and UBE2E3. Interacts with RELA/p65. Ubiquitinated; autoubiquitinated. In terms of tissue distribution, ubiquitous.

Its subcellular location is the cytoplasm. The catalysed reaction is S-ubiquitinyl-[E2 ubiquitin-conjugating enzyme]-L-cysteine + [acceptor protein]-L-lysine = [E2 ubiquitin-conjugating enzyme]-L-cysteine + N(6)-ubiquitinyl-[acceptor protein]-L-lysine.. It participates in protein modification; protein ubiquitination. In terms of biological role, E3 ubiquitin-protein ligase that plays a key role in the RNF14-RNF25 translation quality control pathway, a pathway that takes place when a ribosome has stalled during translation, and which promotes ubiquitination and degradation of translation factors on stalled ribosomes. Catalyzes ubiquitination of RPS27A in response to ribosome collisions, promoting activation of RNF14. RNF25 catalyzes ubiquitination of other ribosomal proteins on stalled ribosomes, such as RPL0, RPL1, RPL12, RPS13 and RPS17. Also involved in ubiquitination and degradation of stalled ETF1/eRF1. Independently of its function in the response to stalled ribosomes, mediates ubiquitination and subsequent proteasomal degradation of NKD2. May also stimulate transcription mediated by NF-kappa-B via its interaction with RELA/p65. The protein is E3 ubiquitin-protein ligase RNF25 of Mus musculus (Mouse).